The chain runs to 1437 residues: Gag-Pol polyprotein (1437 aa).

A lipid anchor (N-myristoyl glycine; by host) is attached at G2. Positions 7–31 are interaction with Gp41; that stretch reads VLSGGELDKWEKIRLRPGGKKKYKL. The tract at residues 8-43 is interaction with host CALM1; sequence LSGGELDKWEKIRLRPGGKKKYKLKHIVWASRELER. An interaction with host AP3D1 region spans residues 12–19; sequence ELDKWEKI. An interaction with membrane phosphatidylinositol 4,5-bisphosphate and RNA region spans residues 14–33; that stretch reads DKWEKIRLRPGGKKKYKLKH. Residues 16–22 carry the Nuclear export signal motif; the sequence is WEKIRLR. The short motif at 26-32 is the Nuclear localization signal element; the sequence is KKKYKLK. Residues 73 to 77 form an interaction with membrane phosphatidylinositol 4,5-bisphosphate region; sequence EELRS. The tract at residues 106-129 is disordered; the sequence is EEQNKSKKKAQQAAAAAGTGNSSQ. Y134 carries the phosphotyrosine; by host modification. The segment at 191–229 is interaction with human PPIA/CYPA and NUP153; sequence NTVGGHQAAMQMLKETINEEAAEWDRVHPVHAGPIAPGQ. Positions 279 to 365 are dimerization/Multimerization of capsid protein p24; sequence YSPTSILDIR…GGPGHKARVL (87 aa). CCHC-type zinc fingers lie at residues 392-409 and 413-430; these read VKCFNCGKEGHIAKNCRA and KGCWRCGREGHQMKDCTE. Residues 491 to 495 are dimerization of protease; that stretch reads PQITL. A Peptidase A2 domain is found at 510–579; it reads KEALLDTGAD…TPVNIIGRNL (70 aa). Residue D515 is the For protease activity; shared with dimeric partner of the active site. Dimerization of protease stretches follow at residues 539 to 545 and 578 to 590; these read GIGGFIK and NLLTQIGCTLNFP. A Reverse transcriptase domain is found at 633 to 823; it reads EGKISKIGPE…PPFLWMGYEL (191 aa). Residues D699, D774, and D775 each contribute to the Mg(2+) site. The interval 816–824 is RT 'primer grip'; that stretch reads FLWMGYELH. A Tryptophan repeat motif motif is present at residues 987–1003; the sequence is WEAWWMEYWQATWIPEW. The region spanning 1023–1146 is the RNase H type-1 domain; it reads IVGAETFYVD…VDKLVSAGIR (124 aa). Mg(2+) contacts are provided by D1032, E1067, D1087, and D1138. Residues 1152–1193 form an Integrase-type zinc finger; sequence NGIDKAQEEHEKYHSNWRAMASDFNLPPVVAKEIVASCDKCQ. H1161, H1165, C1189, and C1192 together coordinate Zn(2+). Residues 1203 to 1353 form the Integrase catalytic domain; the sequence is VDCSPGIWQL…SAGERIVDII (151 aa). Positions 1213, 1265, and 1301 each coordinate Mg(2+). The integrase-type DNA-binding region spans 1372–1419; the sequence is FRVYYRDNKDPLWKGPAKLLWKGEGAVVIQDNSDIKVVPRRKAKIIRD.

As to quaternary structure, homotrimer; further assembles as hexamers of trimers. Interacts with gp41 (via C-terminus). Interacts with host CALM1; this interaction induces a conformational change in the Matrix protein, triggering exposure of the myristate group. Interacts with host AP3D1; this interaction allows the polyprotein trafficking to multivesicular bodies during virus assembly. Part of the pre-integration complex (PIC) which is composed of viral genome, matrix protein, Vpr and integrase. In terms of assembly, homodimer; the homodimer further multimerizes as homohexamers or homopentamers. Interacts with human PPIA/CYPA; This interaction stabilizes the capsid. Interacts with human NUP153. Interacts with host PDZD8; this interaction stabilizes the capsid. Interacts with monkey TRIM5; this interaction destabilizes the capsid. Homodimer, whose active site consists of two apposed aspartic acid residues. As to quaternary structure, heterodimer of p66 RT and p51 RT (RT p66/p51). Heterodimerization of RT is essential for DNA polymerase activity. The overall folding of the subdomains is similar in p66 RT and p51 RT but the spatial arrangements of the subdomains are dramatically different. In terms of assembly, homotetramer; may further associate as a homohexadecamer. Part of the pre-integration complex (PIC) which is composed of viral genome, matrix protein, Vpr and integrase. Interacts with human SMARCB1/INI1 and human PSIP1/LEDGF isoform 1. Interacts with human KPNA3; this interaction might play a role in nuclear import of the pre-integration complex. Interacts with human NUP153; this interaction might play a role in nuclear import of the pre-integration complex. Mg(2+) is required as a cofactor. In terms of processing, specific enzymatic cleavages by the viral protease yield mature proteins. The protease is released by autocatalytic cleavage. The polyprotein is cleaved during and after budding, this process is termed maturation. Proteolytic cleavage of p66 RT removes the RNase H domain to yield the p51 RT subunit. Nucleocapsid protein p7 might be further cleaved after virus entry. Post-translationally, tyrosine phosphorylated presumably in the virion by a host kinase. Phosphorylation is apparently not a major regulator of membrane association. Phosphorylated possibly by host MAPK1; this phosphorylation is necessary for Pin1-mediated virion uncoating. In terms of processing, methylated by host PRMT6, impairing its function by reducing RNA annealing and the initiation of reverse transcription.

The protein resides in the host cell membrane. Its subcellular location is the host endosome. The protein localises to the host multivesicular body. It is found in the virion membrane. It localises to the host nucleus. The protein resides in the host cytoplasm. Its subcellular location is the virion. It carries out the reaction Specific for a P1 residue that is hydrophobic, and P1' variable, but often Pro.. The catalysed reaction is Endohydrolysis of RNA in RNA/DNA hybrids. Three different cleavage modes: 1. sequence-specific internal cleavage of RNA. Human immunodeficiency virus type 1 and Moloney murine leukemia virus enzymes prefer to cleave the RNA strand one nucleotide away from the RNA-DNA junction. 2. RNA 5'-end directed cleavage 13-19 nucleotides from the RNA end. 3. DNA 3'-end directed cleavage 15-20 nucleotides away from the primer terminus.. The enzyme catalyses 3'-end directed exonucleolytic cleavage of viral RNA-DNA hybrid.. It catalyses the reaction DNA(n) + a 2'-deoxyribonucleoside 5'-triphosphate = DNA(n+1) + diphosphate. Its activity is regulated as follows. Protease: The viral protease is inhibited by many synthetic protease inhibitors (PIs), such as amprenavir, atazanavir, indinavir, loprinavir, nelfinavir, ritonavir and saquinavir. Use of protease inhibitors in tritherapy regimens permit more ambitious therapeutic strategies. Reverse transcriptase/ribonuclease H: RT can be inhibited either by nucleoside RT inhibitors (NRTIs) or by non nucleoside RT inhibitors (NNRTIs). NRTIs act as chain terminators, whereas NNRTIs inhibit DNA polymerization by binding a small hydrophobic pocket near the RT active site and inducing an allosteric change in this region. Classical NRTIs are abacavir, adefovir (PMEA), didanosine (ddI), lamivudine (3TC), stavudine (d4T), tenofovir (PMPA), zalcitabine (ddC), and zidovudine (AZT). Classical NNRTIs are atevirdine (BHAP U-87201E), delavirdine, efavirenz (DMP-266), emivirine (I-EBU), and nevirapine (BI-RG-587). The tritherapies used as a basic effective treatment of AIDS associate two NRTIs and one NNRTI. Mediates, with Gag polyprotein, the essential events in virion assembly, including binding the plasma membrane, making the protein-protein interactions necessary to create spherical particles, recruiting the viral Env proteins, and packaging the genomic RNA via direct interactions with the RNA packaging sequence (Psi). Gag-Pol polyprotein may regulate its own translation, by the binding genomic RNA in the 5'-UTR. At low concentration, the polyprotein would promote translation, whereas at high concentration, the polyprotein would encapsidate genomic RNA and then shut off translation. Its function is as follows. Targets the polyprotein to the plasma membrane via a multipartite membrane-binding signal, that includes its myristoylated N-terminus. Matrix protein is part of the pre-integration complex. Implicated in the release from host cell mediated by Vpu. Binds to RNA. In terms of biological role, forms the conical core that encapsulates the genomic RNA-nucleocapsid complex in the virion. Most core are conical, with only 7% tubular. The core is constituted by capsid protein hexamer subunits. The core is disassembled soon after virion entry. Host restriction factors such as TRIM5-alpha or TRIMCyp bind retroviral capsids and cause premature capsid disassembly, leading to blocks in reverse transcription. Capsid restriction by TRIM5 is one of the factors which restricts HIV-1 to the human species. Host PIN1 apparently facilitates the virion uncoating. On the other hand, interactions with PDZD8 or CYPA stabilize the capsid. Functionally, encapsulates and protects viral dimeric unspliced genomic RNA (gRNA). Binds these RNAs through its zinc fingers. Acts as a nucleic acid chaperone which is involved in rearangement of nucleic acid secondary structure during gRNA retrotranscription. Also facilitates template switch leading to recombination. As part of the polyprotein, participates in gRNA dimerization, packaging, tRNA incorporation and virion assembly. Aspartyl protease that mediates proteolytic cleavages of Gag and Gag-Pol polyproteins during or shortly after the release of the virion from the plasma membrane. Cleavages take place as an ordered, step-wise cascade to yield mature proteins. This process is called maturation. Displays maximal activity during the budding process just prior to particle release from the cell. Also cleaves Nef and Vif, probably concomitantly with viral structural proteins on maturation of virus particles. Hydrolyzes host EIF4GI and PABP1 in order to shut off the capped cellular mRNA translation. The resulting inhibition of cellular protein synthesis serves to ensure maximal viral gene expression and to evade host immune response. Also mediates cleavage of host YTHDF3. Mediates cleavage of host CARD8, thereby activating the CARD8 inflammasome, leading to the clearance of latent HIV-1 in patient CD4(+) T-cells after viral reactivation; in contrast, HIV-1 can evade CARD8-sensing when its protease remains inactive in infected cells prior to viral budding. Its function is as follows. Multifunctional enzyme that converts the viral RNA genome into dsDNA in the cytoplasm, shortly after virus entry into the cell. This enzyme displays a DNA polymerase activity that can copy either DNA or RNA templates, and a ribonuclease H (RNase H) activity that cleaves the RNA strand of RNA-DNA heteroduplexes in a partially processive 3' to 5' endonucleasic mode. Conversion of viral genomic RNA into dsDNA requires many steps. A tRNA(3)-Lys binds to the primer-binding site (PBS) situated at the 5'-end of the viral RNA. RT uses the 3' end of the tRNA primer to perform a short round of RNA-dependent minus-strand DNA synthesis. The reading proceeds through the U5 region and ends after the repeated (R) region which is present at both ends of viral RNA. The portion of the RNA-DNA heteroduplex is digested by the RNase H, resulting in a ssDNA product attached to the tRNA primer. This ssDNA/tRNA hybridizes with the identical R region situated at the 3' end of viral RNA. This template exchange, known as minus-strand DNA strong stop transfer, can be either intra- or intermolecular. RT uses the 3' end of this newly synthesized short ssDNA to perform the RNA-dependent minus-strand DNA synthesis of the whole template. RNase H digests the RNA template except for two polypurine tracts (PPTs) situated at the 5'-end and near the center of the genome. It is not clear if both polymerase and RNase H activities are simultaneous. RNase H probably can proceed both in a polymerase-dependent (RNA cut into small fragments by the same RT performing DNA synthesis) and a polymerase-independent mode (cleavage of remaining RNA fragments by free RTs). Secondly, RT performs DNA-directed plus-strand DNA synthesis using the PPTs that have not been removed by RNase H as primers. PPTs and tRNA primers are then removed by RNase H. The 3' and 5' ssDNA PBS regions hybridize to form a circular dsDNA intermediate. Strand displacement synthesis by RT to the PBS and PPT ends produces a blunt ended, linear dsDNA copy of the viral genome that includes long terminal repeats (LTRs) at both ends. In terms of biological role, catalyzes viral DNA integration into the host chromosome, by performing a series of DNA cutting and joining reactions. This enzyme activity takes place after virion entry into a cell and reverse transcription of the RNA genome in dsDNA. The first step in the integration process is 3' processing. This step requires a complex comprising the viral genome, matrix protein, Vpr and integrase. This complex is called the pre-integration complex (PIC). The integrase protein removes 2 nucleotides from each 3' end of the viral DNA, leaving recessed CA OH's at the 3' ends. In the second step, the PIC enters cell nucleus. This process is mediated through integrase and Vpr proteins, and allows the virus to infect a non dividing cell. This ability to enter the nucleus is specific of lentiviruses, other retroviruses cannot and rely on cell division to access cell chromosomes. In the third step, termed strand transfer, the integrase protein joins the previously processed 3' ends to the 5' ends of strands of target cellular DNA at the site of integration. The 5'-ends are produced by integrase-catalyzed staggered cuts, 5 bp apart. A Y-shaped, gapped, recombination intermediate results, with the 5'-ends of the viral DNA strands and the 3' ends of target DNA strands remaining unjoined, flanking a gap of 5 bp. The last step is viral DNA integration into host chromosome. This involves host DNA repair synthesis in which the 5 bp gaps between the unjoined strands are filled in and then ligated. Since this process occurs at both cuts flanking the HIV genome, a 5 bp duplication of host DNA is produced at the ends of HIV-1 integration. Alternatively, Integrase may catalyze the excision of viral DNA just after strand transfer, this is termed disintegration. The sequence is that of Gag-Pol polyprotein (gag-pol) from Human immunodeficiency virus type 1 group M subtype B (isolate ARV2/SF2) (HIV-1).